Reading from the N-terminus, the 1309-residue chain is Target of rapamycin complex 2 subunit ste20 (1309 aa).

The region spanning 24–110 (DFIKKMNTTD…IESFQGENGE (87 aa)) is the REM-1 domain. The interval 105-128 (QGENGEAKTGSTSLTRSASATVSR) is disordered. Over residues 113-128 (TGSTSLTRSASATVSR) the composition is skewed to polar residues. Residue serine 151 is modified to Phosphoserine. Residues 183–205 (NVNEKNNSSSEDTQPNGKRPSSL) are disordered. A compositionally biased stretch (polar residues) spans 194–205 (DTQPNGKRPSSL). 6 helical membrane-spanning segments follow: residues 285–305 (LFLD…WILS), 392–412 (LIDG…LVYL), 504–524 (VIDL…ESFL), 564–584 (TAVL…VCMI), 926–946 (LNHW…LEVC), and 984–1004 (LLLR…INFI). At threonine 1203 the chain carries Phosphothreonine.

Belongs to the RICTOR family. The target of rapamycin complex 2 (TORC2) is composed of at least bit61, pop3/wat1, sin1, ste20 and tor1. In terms of processing, either Ser-203 or Ser-204 are phosphorylated as well.

It localises to the membrane. Its function is as follows. Component of TORC2, which regulates multiple cellular processes to control cell growth in response to environmental signals. TORC2 is required for cell survival under various stress conditions. TORC2 positively controls G1 cell-cycle arrest, sexual development and amino acid uptake. Positively regulates amino acid uptake through the control of expression of amino acid permeases. This chain is Target of rapamycin complex 2 subunit ste20, found in Schizosaccharomyces pombe (strain 972 / ATCC 24843) (Fission yeast).